The chain runs to 41 residues: Cytochrome b559 subunit beta (41 aa).

Residues 16-32 (WLAVHALAVPTVFFLGS) traverse the membrane as a helical segment. H20 provides a ligand contact to heme.

This sequence belongs to the PsbE/PsbF family. As to quaternary structure, heterodimer of an alpha subunit and a beta subunit. PSII is composed of 1 copy each of membrane proteins PsbA, PsbB, PsbC, PsbD, PsbE, PsbF, PsbH, PsbI, PsbJ, PsbK, PsbL, PsbM, PsbT, PsbX, PsbY, PsbZ, Psb30/Ycf12, at least 3 peripheral proteins of the oxygen-evolving complex and a large number of cofactors. It forms dimeric complexes. The cofactor is heme b.

Its subcellular location is the plastid. The protein resides in the chloroplast thylakoid membrane. Its function is as follows. This b-type cytochrome is tightly associated with the reaction center of photosystem II (PSII). PSII is a light-driven water:plastoquinone oxidoreductase that uses light energy to abstract electrons from H(2)O, generating O(2) and a proton gradient subsequently used for ATP formation. It consists of a core antenna complex that captures photons, and an electron transfer chain that converts photonic excitation into a charge separation. This is Cytochrome b559 subunit beta from Nephroselmis olivacea (Green alga).